The primary structure comprises 249 residues: Caffeoyl-CoA O-methyltransferase 1 (249 aa).

Residue K23 participates in substrate binding. Residues T65, E87, 89-90 (GV), S95, D113, and A142 contribute to the S-adenosyl-L-methionine site. D165 contributes to the substrate binding site. D165 provides a ligand contact to a divalent metal cation. D167 is a binding site for S-adenosyl-L-methionine. D191 and N192 together coordinate a divalent metal cation. N196 is a substrate binding site.

This sequence belongs to the class I-like SAM-binding methyltransferase superfamily. Cation-dependent O-methyltransferase family. CCoAMT subfamily. A divalent metal cation is required as a cofactor. Mostly expressed in petal limbs and tubes, and, at low levels, in flower buds, stamens, pistils, stems, roots and leaves.

The protein localises to the cytoplasm. It is found in the cytosol. The enzyme catalyses (E)-caffeoyl-CoA + S-adenosyl-L-methionine = (E)-feruloyl-CoA + S-adenosyl-L-homocysteine + H(+). The catalysed reaction is (E)-5-hydroxyferuloyl-CoA + S-adenosyl-L-methionine = (E)-sinapoyl-CoA + S-adenosyl-L-homocysteine + H(+). Its pathway is aromatic compound metabolism; phenylpropanoid biosynthesis. Its function is as follows. Involved in the production of floral volatile phenylpropanoids in flowers of fragrant cultivars (e.g. cv. Mitchell and cv. V26) from cinnamic acid, a common precursor with the anthocyanin biosynthesis pathway involved in flower pigmentation. Methylates caffeoyl-CoA to feruloyl-CoA, also able to methylate 5-hydroxyferuloyl-CoA. This is Caffeoyl-CoA O-methyltransferase 1 from Petunia hybrida (Petunia).